Consider the following 553-residue polypeptide: Thioredoxin domain-containing protein 2 (553 aa).

2 disordered regions span residues 1–37 (MDVD…DANE) and 77–442 (TEES…EETM). Positions 99–143 (PKQDDSPKSSEETIQPKEGDIPKAPEETIQSKKEDLPKSSEKAIQ) are enriched in basic and acidic residues. A run of 22 repeats spans residues 113–127 (QPKE…EETI), 128–142 (QSKK…EKAI), 143–157 (QPKE…AKPI), 158–172 (QPKL…VKPS), 173–187 (QPKE…EETI), 188–202 (QSKK…EEAI), 203–217 (QPKE…AKPI), 218–232 (QPKL…VKPS), 233–247 (QPKE…EETI), 248–262 (QPKE…AKPI), 263–277 (QPKL…VKPS), 278–292 (QPKE…EEAI), 293–307 (QPKE…EEAI), 308–322 (QPKE…EEAI), 323–337 (QPKE…EEAI), 338–352 (QPKE…EETI), 353–367 (QPKK…EEAI), 368–382 (QPKE…KQAI), 383–397 (QPKE…EEAI), 398–412 (PPKE…EETI), 413–427 (QPKE…EEAT), and 428–442 (PSKE…EETM). Positions 113–442 (QPKEGDIPKA…DILKPEEETM (330 aa)) are 22 X 15 AA approximate tandem repeat of Q-P-K-X-G-D-I-P-K-S-[PS]-E-[KE]-X-I. A compositionally biased stretch (basic and acidic residues) spans 173-209 (QPKEGDIPKAPEETIQSKKEDLPKSSEEAIQPKEGDI). Residues 233 to 254 (QPKESDIPKSPEETIQPKEGDI) show a composition bias toward basic and acidic residues. 2 stretches are compositionally biased toward basic and acidic residues: residues 278–376 (QPKE…DIPK) and 385–439 (KEGD…KPEE). Serine 362 carries the phosphoserine modification. The residue at position 392 (serine 392) is a Phosphoserine. One can recognise a Thioredoxin domain in the interval 429-553 (SKEGDILKPE…KLEAVIAELK (125 aa)). Residues cysteine 480 and cysteine 483 are joined by a disulfide bond.

As to expression, testis-specific. Only expressed during spermiogenesis, prominently in round and elongating spermatids.

It localises to the cytoplasm. In terms of biological role, probably plays a regulatory role in sperm development. May participate in regulation of fibrous sheath (FS) assembly by supporting the formation of disulfide bonds during sperm tail morphogenesis. May also be required to rectify incorrect disulfide pairing and generate suitable pairs between the FS constituents. Can reduce disulfide bonds in vitro in the presence of NADP and thioredoxin reductase. This chain is Thioredoxin domain-containing protein 2 (TXNDC2), found in Homo sapiens (Human).